Reading from the N-terminus, the 82-residue chain is Conotoxin MiK42 (82 aa).

Residues 1 to 22 (MKLTCALIVAMLLLTACQLITT) form the signal peptide. Positions 23 to 49 (DDFRGRQQYRTARSRTKMQNYKIFRLT) are excised as a propeptide. 3 disulfides stabilise this stretch: cysteine 52–cysteine 67, cysteine 59–cysteine 70, and cysteine 66–cysteine 80.

Belongs to the conotoxin O1 superfamily. In terms of tissue distribution, expressed by the venom duct.

It localises to the secreted. This is Conotoxin MiK42 from Conus miles (Soldier cone).